A 403-amino-acid chain; its full sequence is Argininosuccinate synthase (403 aa).

ATP contacts are provided by residues Ala13–Ser21 and Ala40. Residues Tyr92 and Ser97 each contribute to the L-citrulline site. Residue Gly122 coordinates ATP. L-aspartate contacts are provided by Thr124, Asn128, and Asp129. Position 128 (Asn128) interacts with L-citrulline. 5 residues coordinate L-citrulline: Arg132, Ser181, Ser190, Glu266, and Tyr278.

The protein belongs to the argininosuccinate synthase family. Type 1 subfamily. As to quaternary structure, homotetramer.

It is found in the cytoplasm. It carries out the reaction L-citrulline + L-aspartate + ATP = 2-(N(omega)-L-arginino)succinate + AMP + diphosphate + H(+). Its pathway is amino-acid biosynthesis; L-arginine biosynthesis; L-arginine from L-ornithine and carbamoyl phosphate: step 2/3. The chain is Argininosuccinate synthase from Aliivibrio fischeri (strain MJ11) (Vibrio fischeri).